We begin with the raw amino-acid sequence, 318 residues long: NADH-ubiquinone oxidoreductase chain 1 (318 aa).

8 helical membrane-spanning segments follow: residues 2–22 (FLTN…FLTL), 70–90 (MFLM…IPLP), 102–122 (LLFM…SGWA), 147–167 (AIIL…TLII), 171–191 (YMWL…STLA), 222–242 (LFFL…TILF), 253–273 (ELYT…FLWI), and 294–314 (LPLT…TAAI).

Belongs to the complex I subunit 1 family.

The protein resides in the mitochondrion inner membrane. It carries out the reaction a ubiquinone + NADH + 5 H(+)(in) = a ubiquinol + NAD(+) + 4 H(+)(out). Core subunit of the mitochondrial membrane respiratory chain NADH dehydrogenase (Complex I) that is believed to belong to the minimal assembly required for catalysis. Complex I functions in the transfer of electrons from NADH to the respiratory chain. The immediate electron acceptor for the enzyme is believed to be ubiquinone. In Diaemus youngi (White-winged vampire bat), this protein is NADH-ubiquinone oxidoreductase chain 1 (MT-ND1).